The sequence spans 373 residues: Exonuclease V (373 aa).

Position 92 (C92) interacts with [4Fe-4S] cluster. Residues D182 and E196 each contribute to the Mg(2+) site. The [4Fe-4S] cluster site is built by C343, C346, and C352.

The protein belongs to the EXO5 family. As to quaternary structure, monomer; monomeric form has weak exonuclease activity. Homodimer; homodimeric form is unsure but has much higher exonuclease activity, suggesting that it could homodimerize upon DNA-binding. Interacts with the replication protein A (RPA) complex. Requires [4Fe-4S] cluster as cofactor. Mg(2+) serves as cofactor.

The protein localises to the nucleus. Its subcellular location is the cytoplasm. It localises to the cytosol. In terms of biological role, single-stranded DNA (ssDNA) bidirectional exonuclease involved in DNA repair. Probably involved in DNA repair following ultraviolet (UV) irradiation and interstrand cross-links (ICLs) damage. Has both 5'-3' and 3'-5' exonuclease activities with a strong preference for 5'-ends. Acts as a sliding exonuclease that loads at ssDNA ends and then slides along the ssDNA prior to cutting; however the sliding and the 3'-5' exonuclease activities are abolished upon binding to the replication protein A (RPA) complex that enforces 5'-directionality activity. This Homo sapiens (Human) protein is Exonuclease V (EXO5).